The chain runs to 466 residues: Oryzain beta chain (466 aa).

An N-terminal signal peptide occupies residues 1–21; the sequence is MAARAAAAAFLLLLIVGAATA. Residues 22–140 constitute a propeptide, activation peptide; that stretch reads APDMSIISYN…ERYRHDGVEE (119 aa). 3 disulfide bridges follow: cysteine 162–cysteine 205, cysteine 196–cysteine 238, and cysteine 296–cysteine 347. Residue cysteine 165 is part of the active site. Residues histidine 302 and asparagine 322 contribute to the active site. Asparagine 341 carries an N-linked (GlcNAc...) asparagine glycan. The segment at 358-380 is disordered; it reads KSGANPPKPSPTPPTPPTPPPPS. A propeptide spans 362-466 (removed in mature form); that stretch reads NPPKPSPTPP…KRTLAKLNTA (105 aa). The span at 363 to 380 shows a compositional bias: pro residues; sequence PPKPSPTPPTPPTPPPPS. 2 disulfides stabilise this stretch: cysteine 386–cysteine 398 and cysteine 392–cysteine 413. N-linked (GlcNAc...) asparagine glycosylation is present at asparagine 389.

This sequence belongs to the peptidase C1 family. As to expression, expressed only in seeds.

Probable thiol protease. The sequence is that of Oryzain beta chain from Oryza sativa subsp. japonica (Rice).